The chain runs to 383 residues: UDP-D-xylose:L-fucose alpha-1,3-D-xylosyltransferase 3 (383 aa).

Residues 1 to 20 lie on the Cytoplasmic side of the membrane; sequence MAQQSQRPISNRHISLLNRN. A helical; Signal-anchor for type II membrane protein transmembrane segment spans residues 21 to 41; that stretch reads GLILLLLLALFVILGVFLPLT. At 42–383 the chain is on the lumenal side; that stretch reads KSSLFMFPNT…KNRGKKHKLP (342 aa). N-linked (GlcNAc...) asparagine glycosylation is found at N50, N82, and N157. The short motif at 180 to 182 is the DXD motif element; sequence DVD. 6 N-linked (GlcNAc...) asparagine glycosylation sites follow: N212, N258, N301, N306, N357, and N364.

Belongs to the glycosyltransferase 77 family. Mn(2+) is required as a cofactor. It depends on Mg(2+) as a cofactor. Post-translationally, glycosylated. Expressed around trichome support cells in the adaxial epidermis of rosette leaves, in cauline leaves, petals and both the proximal and distal ends of siliques.

It is found in the golgi apparatus membrane. In terms of biological role, catalyzes the transfer of D-xylose from UDP-alpha-D-xylose onto L-fucose. Probably involved in the biosynthesis of rhamnogalacturonan II (RG-II) through xylosylation of the internal fucose moiety of the A-chain of RG-II, a structurally complex pectic polysaccharide of the primary cell wall. RG-II is essential for the cell wall integrity of rapidly growing tissues such as roots and pollen tube growth and elongation. The sequence is that of UDP-D-xylose:L-fucose alpha-1,3-D-xylosyltransferase 3 from Arabidopsis thaliana (Mouse-ear cress).